The primary structure comprises 223 residues: 2-C-methyl-D-erythritol 4-phosphate cytidylyltransferase (223 aa).

The protein belongs to the IspD/TarI cytidylyltransferase family. IspD subfamily.

The catalysed reaction is 2-C-methyl-D-erythritol 4-phosphate + CTP + H(+) = 4-CDP-2-C-methyl-D-erythritol + diphosphate. It functions in the pathway isoprenoid biosynthesis; isopentenyl diphosphate biosynthesis via DXP pathway; isopentenyl diphosphate from 1-deoxy-D-xylulose 5-phosphate: step 2/6. Its function is as follows. Catalyzes the formation of 4-diphosphocytidyl-2-C-methyl-D-erythritol from CTP and 2-C-methyl-D-erythritol 4-phosphate (MEP). This is 2-C-methyl-D-erythritol 4-phosphate cytidylyltransferase from Prochlorococcus marinus (strain MIT 9301).